The sequence spans 387 residues: Carboxynorspermidine/carboxyspermidine decarboxylase (387 aa).

Position 51 is an N6-(pyridoxal phosphate)lysine (lysine 51). 2 residues coordinate substrate: glutamate 248 and aspartate 284.

This sequence belongs to the Orn/Lys/Arg decarboxylase class-II family. NspC subfamily. Homodimer. The cofactor is pyridoxal 5'-phosphate.

It localises to the cytoplasm. The enzyme catalyses carboxynorspermidine + H(+) = norspermidine + CO2. It catalyses the reaction carboxyspermidine + H(+) = spermidine + CO2. Catalyzes the decarboxylation of carboxynorspermidine and carboxyspermidine. Essential for biofilm formation. The polypeptide is Carboxynorspermidine/carboxyspermidine decarboxylase (Vibrio cholerae serotype O1 (strain ATCC 39315 / El Tor Inaba N16961)).